A 365-amino-acid chain; its full sequence is Histidinol-phosphate aminotransferase (365 aa).

Lysine 221 is subject to N6-(pyridoxal phosphate)lysine.

It belongs to the class-II pyridoxal-phosphate-dependent aminotransferase family. Histidinol-phosphate aminotransferase subfamily. As to quaternary structure, homodimer. Pyridoxal 5'-phosphate serves as cofactor.

The catalysed reaction is L-histidinol phosphate + 2-oxoglutarate = 3-(imidazol-4-yl)-2-oxopropyl phosphate + L-glutamate. Its pathway is amino-acid biosynthesis; L-histidine biosynthesis; L-histidine from 5-phospho-alpha-D-ribose 1-diphosphate: step 7/9. The protein is Histidinol-phosphate aminotransferase of Nitrobacter hamburgensis (strain DSM 10229 / NCIMB 13809 / X14).